Consider the following 163-residue polypeptide: Large ribosomal subunit protein eL24y (163 aa).

Residues 119 to 133 are compositionally biased toward basic and acidic residues; the sequence is IKKTKDEKKAKKVEF. Residues 119–163 are disordered; sequence IKKTKDEKKAKKVEFASKQQKVKANFPKAAAASKGPKVGGGGGKR.

This sequence belongs to the eukaryotic ribosomal protein eL24 family. As to quaternary structure, interacts with REIL1 and REIL2. Component of the large ribosomal subunit. In terms of tissue distribution, ubiquitous.

The protein localises to the cytoplasm. It localises to the nucleus. The protein resides in the nucleolus. Its subcellular location is the nucleoplasm. In terms of biological role, might have an extraribosomal function in reinitiation of translation of ETTIN and MONOPTEROS genes that are involved in the auxin-mediated gynoecium patterning. Essential in leaf polarity establishment, probably having a role for translation in leaf dorsoventral patterning to specify leaf adaxial identity. This is Large ribosomal subunit protein eL24y from Arabidopsis thaliana (Mouse-ear cress).